We begin with the raw amino-acid sequence, 81 residues long: Large ribosomal subunit protein bL31B (81 aa).

This sequence belongs to the bacterial ribosomal protein bL31 family. Type B subfamily. Part of the 50S ribosomal subunit.

The sequence is that of Large ribosomal subunit protein bL31B from Limosilactobacillus fermentum (strain NBRC 3956 / LMG 18251) (Lactobacillus fermentum).